Reading from the N-terminus, the 714-residue chain is Cyclomaltodextrin glucanotransferase (714 aa).

The first 27 residues, 1-27, serve as a signal peptide directing secretion; the sequence is MKSRYKRLTSLALSLSMALGISLPAWA. An A1 region spans residues 28 to 165; sequence SPDTSVDNKV…NIKVVIDFAP (138 aa). D54, N59, N60, G78, and D80 together coordinate Ca(2+). 127 to 128 is a binding site for substrate; it reads YW. N166 is a Ca(2+) binding site. The tract at residues 166–229 is b; the sequence is NHTSPADRDN…NLYDLADINH (64 aa). H167 contributes to the substrate binding site. I217 serves as a coordination point for Ca(2+). Residue 220–223 participates in substrate binding; that stretch reads NLYD. Residue D226 coordinates Ca(2+). The tract at residues 230 to 434 is A2; the sequence is NNNAMDAYFK…LRKSNPAIAY (205 aa). Position 254 (R254) interacts with substrate. The active-site Nucleophile is D256. Residue 259–260 coordinates substrate; that stretch reads KH. Residue H260 coordinates Ca(2+). The active-site Proton donor is E285. 3 residues coordinate substrate: H355, D399, and R403. The segment at 435–523 is c; the sequence is GTTTERWVNN…GTAVWQYTAP (89 aa). Positions 524–610 are d; it reads ETSPAIGNVG…SNTFKSFNVL (87 aa). The IPT/TIG domain occupies 527-607; it reads PAIGNVGPTM…GTASNTFKSF (81 aa). Residues 609 to 714 enclose the CBM20 domain; that stretch reads VLTGDQVTVR…VGTVTVDWQN (106 aa). The segment at 611–714 is e; sequence TGDQVTVRFL…VGTVTVDWQN (104 aa).

The protein belongs to the glycosyl hydrolase 13 family. In terms of assembly, monomer. It depends on Ca(2+) as a cofactor.

It is found in the secreted. The enzyme catalyses Cyclizes part of a (1-&gt;4)-alpha-D-glucan chain by formation of a (1-&gt;4)-alpha-D-glucosidic bond.. The protein is Cyclomaltodextrin glucanotransferase (cgtM) of Paenibacillus macerans (Bacillus macerans).